We begin with the raw amino-acid sequence, 150 residues long: SsrA-binding protein (150 aa).

It belongs to the SmpB family.

It localises to the cytoplasm. Required for rescue of stalled ribosomes mediated by trans-translation. Binds to transfer-messenger RNA (tmRNA), required for stable association of tmRNA with ribosomes. tmRNA and SmpB together mimic tRNA shape, replacing the anticodon stem-loop with SmpB. tmRNA is encoded by the ssrA gene; the 2 termini fold to resemble tRNA(Ala) and it encodes a 'tag peptide', a short internal open reading frame. During trans-translation Ala-aminoacylated tmRNA acts like a tRNA, entering the A-site of stalled ribosomes, displacing the stalled mRNA. The ribosome then switches to translate the ORF on the tmRNA; the nascent peptide is terminated with the 'tag peptide' encoded by the tmRNA and targeted for degradation. The ribosome is freed to recommence translation, which seems to be the essential function of trans-translation. The protein is SsrA-binding protein of Campylobacter jejuni (strain RM1221).